A 129-amino-acid chain; its full sequence is Antileukoproteinase (129 aa).

A signal peptide spans 1-22 (GRGLLPFVLLALGIXAPWAVEG). WAP domains lie at 25-73 (NALK…LNPV) and 79-127 (VKVK…LTPV). 8 disulfide bridges follow: Cys-32/Cys-61, Cys-40/Cys-65, Cys-48/Cys-60, Cys-54/Cys-69, Cys-86/Cys-115, Cys-93/Cys-119, Cys-102/Cys-114, and Cys-108/Cys-123. Residues 81–129 (VKPGKCPVVYGQCMMLNPPNHCKTDSQCLGDLKCCKSMCGKVCLTPVKA) form an elastase inhibitory domain region.

As to quaternary structure, interacts with GRN; interaction protects progranulin from proteolysis. As to expression, found in pregnant endometrium and myometrium, placenta, allantoic fluids, fetal cord blood, and fetal liver. Also found in uterus and lung.

The protein resides in the secreted. Its function is as follows. Acid-stable proteinase inhibitor with strong affinities for trypsin, chymotrypsin, elastase, and cathepsin G. Modulates the inflammatory and immune responses after bacterial infection, and after infection by the intracellular parasite L.major. Down-regulates responses to bacterial lipopolysaccharide (LPS). Plays a role in regulating the activation of NF-kappa-B and inflammatory responses. Has antimicrobial activity against mycobacteria, but not against salmonella. Contributes to normal resistance against infection by M.tuberculosis. Required for normal resistance to infection by L.major. Required for normal wound healing, probably by preventing tissue damage by limiting protease activity. Together with ELANE, required for normal differentiation and proliferation of bone marrow myeloid cells. This Sus scrofa (Pig) protein is Antileukoproteinase (SLPI).